The primary structure comprises 214 residues: Holliday junction branch migration complex subunit RuvA (214 aa).

Residues 1–63 (MISFLRGTVA…EDSLTLFGFS (63 aa)) form a domain I region. The domain II stretch occupies residues 64 to 142 (SDDEREVFDV…PHGTGAAAAP (79 aa)). The flexible linker stretch occupies residues 143–153 (AAAASAPWKPQ). A domain III region spans residues 153 to 214 (QVVAAMTSLG…RAGNRVGSRG (62 aa)).

The protein belongs to the RuvA family. As to quaternary structure, homotetramer. Forms an RuvA(8)-RuvB(12)-Holliday junction (HJ) complex. HJ DNA is sandwiched between 2 RuvA tetramers; dsDNA enters through RuvA and exits via RuvB. An RuvB hexamer assembles on each DNA strand where it exits the tetramer. Each RuvB hexamer is contacted by two RuvA subunits (via domain III) on 2 adjacent RuvB subunits; this complex drives branch migration. In the full resolvosome a probable DNA-RuvA(4)-RuvB(12)-RuvC(2) complex forms which resolves the HJ.

It is found in the cytoplasm. The RuvA-RuvB-RuvC complex processes Holliday junction (HJ) DNA during genetic recombination and DNA repair, while the RuvA-RuvB complex plays an important role in the rescue of blocked DNA replication forks via replication fork reversal (RFR). RuvA specifically binds to HJ cruciform DNA, conferring on it an open structure. The RuvB hexamer acts as an ATP-dependent pump, pulling dsDNA into and through the RuvAB complex. HJ branch migration allows RuvC to scan DNA until it finds its consensus sequence, where it cleaves and resolves the cruciform DNA. The sequence is that of Holliday junction branch migration complex subunit RuvA from Arthrobacter sp. (strain FB24).